The sequence spans 651 residues: Mitogen-activated protein kinase kinase kinase 3 (651 aa).

One can recognise a Protein kinase domain in the interval 68–330; that stretch reads WRKGELIGCG…ATELLQHPFV (263 aa). ATP contacts are provided by residues 74–82 and Lys97; that span reads IGCGAFGRV. The stretch at 105–130 forms a coiled coil; it reads SASKEKTQGHIRELEEEVQLLKNLSH. Residues Lys108 and Lys110 each participate in a glycyl lysine isopeptide (Lys-Gly) (interchain with G-Cter in ubiquitin) cross-link. The Proton acceptor role is filled by Asp196. Residues 573–608 form a disordered region; that stretch reads MPSPLKSSKRTLNTSRVMQSGTEPTQVNESTKKGVN. The segment covering 582–608 has biased composition (polar residues); that stretch reads RTLNTSRVMQSGTEPTQVNESTKKGVN. The stretch at 618–641 forms a coiled coil; it reads RKWEEELYEELERHRENLRHAGAG.

This sequence belongs to the protein kinase superfamily. STE Ser/Thr protein kinase family. MAP kinase kinase kinase subfamily. In terms of assembly, interacts with NACK2 and MKK6. In terms of tissue distribution, expressed in roots and flowers.

It localises to the cytoplasm. The protein localises to the cytoskeleton. It carries out the reaction L-seryl-[protein] + ATP = O-phospho-L-seryl-[protein] + ADP + H(+). It catalyses the reaction L-threonyl-[protein] + ATP = O-phospho-L-threonyl-[protein] + ADP + H(+). Functionally, involved in cortical microtubules organization and stabilization by regulating the phosphorylation state of microtubule-associated proteins such as MAP65-1. This is Mitogen-activated protein kinase kinase kinase 3 (ANP3) from Arabidopsis thaliana (Mouse-ear cress).